A 954-amino-acid polypeptide reads, in one-letter code: Valine--tRNA ligase (954 aa).

The 'HIGH' region motif lies at P48 to H58. A 'KMSKS' region motif is present at residues K560–S564. ATP is bound at residue K563. The stretch at A883 to A953 forms a coiled coil.

It belongs to the class-I aminoacyl-tRNA synthetase family. ValS type 1 subfamily. Monomer.

It localises to the cytoplasm. The catalysed reaction is tRNA(Val) + L-valine + ATP = L-valyl-tRNA(Val) + AMP + diphosphate. In terms of biological role, catalyzes the attachment of valine to tRNA(Val). As ValRS can inadvertently accommodate and process structurally similar amino acids such as threonine, to avoid such errors, it has a 'posttransfer' editing activity that hydrolyzes mischarged Thr-tRNA(Val) in a tRNA-dependent manner. In Haemophilus influenzae (strain PittEE), this protein is Valine--tRNA ligase.